Consider the following 463-residue polypeptide: Glutamate--tRNA ligase 2 (463 aa).

The 'HIGH' region signature appears at 10 to 20 (PSPTGYLHIGG). The 'KMSKS' region signature appears at 238–242 (KLSKR). Residue Lys241 coordinates ATP.

Belongs to the class-I aminoacyl-tRNA synthetase family. Glutamate--tRNA ligase type 1 subfamily. As to quaternary structure, monomer.

The protein resides in the cytoplasm. The catalysed reaction is tRNA(Glu) + L-glutamate + ATP = L-glutamyl-tRNA(Glu) + AMP + diphosphate. Functionally, catalyzes the attachment of glutamate to tRNA(Glu) in a two-step reaction: glutamate is first activated by ATP to form Glu-AMP and then transferred to the acceptor end of tRNA(Glu). The sequence is that of Glutamate--tRNA ligase 2 from Helicobacter acinonychis (strain Sheeba).